Consider the following 363-residue polypeptide: Caffeic acid 3-O-methyltransferase (363 aa).

130 to 136 is a binding site for substrate; it reads MNQDKVL. The interval 162 to 180 is substrate binding; the sequence is AFEYHGKDPRFNKVFNQGM. S-adenosyl-L-methionine contacts are provided by glycine 208, aspartate 231, aspartate 251, methionine 252, and lysine 265. Histidine 269 acts as the Proton acceptor in catalysis.

Belongs to the class I-like SAM-binding methyltransferase superfamily. Cation-independent O-methyltransferase family. COMT subfamily. As to quaternary structure, homodimer.

The catalysed reaction is (E)-caffeate + S-adenosyl-L-methionine = (E)-ferulate + S-adenosyl-L-homocysteine + H(+). It participates in aromatic compound metabolism; phenylpropanoid biosynthesis. Its function is as follows. Catalyzes the conversion of caffeic acid to ferulic acid and of 5-hydroxyferulic acid to sinapic acid. The resulting products may subsequently be converted to the corresponding alcohols that are incorporated into lignins. In Catharanthus roseus (Madagascar periwinkle), this protein is Caffeic acid 3-O-methyltransferase (COMT1).